We begin with the raw amino-acid sequence, 169 residues long: Interleukin-2 (169 aa).

A signal peptide spans 1-20; that stretch reads MYSMQLASCVTLTLVLLVNS. The O-linked (GalNAc...) threonine glycan is linked to T23. C92 and C140 are joined by a disulfide.

Belongs to the IL-2 family. In terms of tissue distribution, produced by immune cells including dendritic cells. In contrast, macrophages do not produce IL2 upon bacterial stimulation.

It is found in the secreted. In terms of biological role, cytokine produced by activated CD4-positive helper T-cells and to a lesser extend activated CD8-positive T-cells and natural killer (NK) cells that plays pivotal roles in the immune response and tolerance. Binds to a receptor complex composed of either the high-affinity trimeric IL-2R (IL2RA/CD25, IL2RB/CD122 and IL2RG/CD132) or the low-affinity dimeric IL-2R (IL2RB and IL2RG). Interaction with the receptor leads to oligomerization and conformation changes in the IL-2R subunits resulting in downstream signaling starting with phosphorylation of JAK1 and JAK3. In turn, JAK1 and JAK3 phosphorylate the receptor to form a docking site leading to the phosphorylation of several substrates including STAT5. This process leads to activation of several pathways including STAT, phosphoinositide-3-kinase/PI3K and mitogen-activated protein kinase/MAPK pathways. Functions as a T-cell growth factor and can increase NK-cell cytolytic activity as well. Promotes strong proliferation of activated B-cells and subsequently immunoglobulin production. Plays a pivotal role in regulating the adaptive immune system by controlling the survival and proliferation of regulatory T-cells, which are required for the maintenance of immune tolerance. Moreover, participates in the differentiation and homeostasis of effector T-cell subsets, including Th1, Th2, Th17 as well as memory CD8-positive T-cells. This chain is Interleukin-2 (Il2), found in Mus musculus (Mouse).